The sequence spans 548 residues: CTP synthase (548 aa).

Positions 1 to 267 (MKTKFIFITG…DQKIAIMLQL (267 aa)) are amidoligase domain. Residue S14 participates in CTP binding. UTP is bound at residue S14. Residues 15-20 (SLGKGL) and D72 contribute to the ATP site. Mg(2+) is bound by residues D72 and E141. CTP contacts are provided by residues 148–150 (DIE), 188–193 (KTKPTQ), and K224. Residues 188–193 (KTKPTQ) and K224 contribute to the UTP site. A Glutamine amidotransferase type-1 domain is found at 292–545 (TIGIVGKYVD…IKAAGKQAVK (254 aa)). G354 provides a ligand contact to L-glutamine. C381 acts as the Nucleophile; for glutamine hydrolysis in catalysis. Residues 382-385 (LGMQ), E405, and R473 each bind L-glutamine. Active-site residues include H518 and E520.

Belongs to the CTP synthase family. As to quaternary structure, homotetramer.

It catalyses the reaction UTP + L-glutamine + ATP + H2O = CTP + L-glutamate + ADP + phosphate + 2 H(+). It carries out the reaction L-glutamine + H2O = L-glutamate + NH4(+). The enzyme catalyses UTP + NH4(+) + ATP = CTP + ADP + phosphate + 2 H(+). It participates in pyrimidine metabolism; CTP biosynthesis via de novo pathway; CTP from UDP: step 2/2. Its activity is regulated as follows. Allosterically activated by GTP, when glutamine is the substrate; GTP has no effect on the reaction when ammonia is the substrate. The allosteric effector GTP functions by stabilizing the protein conformation that binds the tetrahedral intermediate(s) formed during glutamine hydrolysis. Inhibited by the product CTP, via allosteric rather than competitive inhibition. Functionally, catalyzes the ATP-dependent amination of UTP to CTP with either L-glutamine or ammonia as the source of nitrogen. Regulates intracellular CTP levels through interactions with the four ribonucleotide triphosphates. The chain is CTP synthase from Oleidesulfovibrio alaskensis (strain ATCC BAA-1058 / DSM 17464 / G20) (Desulfovibrio alaskensis).